The sequence spans 556 residues: Peptidylarginine deiminase (556 aa).

Residues 1 to 23 form the signal peptide; the sequence is MKKLLQAKALILALGLFQLPAIA. A propeptide spanning residues 24 to 43 is cleaved from the precursor; the sequence is QTQMQADRTNGQFATEEMQR. Cys351 functions as the Amidino-cysteine intermediate in the catalytic mechanism.

The protein belongs to the agmatine deiminase family. FAD is required as a cofactor. It depends on FMN as a cofactor.

Its subcellular location is the secreted. With respect to regulation, inhibited by cysteine and TLCK. Inhibited by high concentration of thiourea and thio-L-citrulline. In terms of biological role, deiminates the guanidino group of C-terminal arginine residues on a variety of peptides, including the vasoregulatory peptide-hormone bradykinin, to yield ammonia and a citrulline residue. May promote the growth of the pathogen in the periodontal pocket by producing ammonia, ammonia having a protective effect during acidic cleaning cycles in the mouth. The polypeptide is Peptidylarginine deiminase (Porphyromonas gingivalis (strain ATCC BAA-308 / W83)).